A 143-amino-acid chain; its full sequence is uncharacterized protein (143 aa).

The 133-residue stretch at 5–137 folds into the HTH marR-type domain; sequence DARLASDLSL…LRNAADLILE (133 aa). Residues 51 to 74 constitute a DNA-binding region (H-T-H motif); the sequence is PGALAIRERVRPPSMTRVIASLAD.

As to quaternary structure, homodimer.

This is an uncharacterized protein from Mycobacterium leprae (strain TN).